The chain runs to 50 residues: uncharacterized protein (50 aa).

A helical transmembrane segment spans residues 10-29; it reads LFFYYPFFIIFLYIYLVFFI.

Its subcellular location is the plastid. It localises to the chloroplast membrane. This is an uncharacterized protein from Marchantia polymorpha (Common liverwort).